The following is a 324-amino-acid chain: D-alanine--D-alanine ligase (324 aa).

The ATP-grasp domain maps to 121–321 (NQYLKAFGVR…IKDVMTDIIE (201 aa)). 149–204 (VEKIGLPCFIKPNLGGSSFGVTKVKTREQIQPAIAKAFSEAEEVMIEAFMGGTELT) contributes to the ATP binding site. Positions 275, 288, and 290 each coordinate Mg(2+).

This sequence belongs to the D-alanine--D-alanine ligase family. It depends on Mg(2+) as a cofactor. Mn(2+) is required as a cofactor.

The protein localises to the cytoplasm. The enzyme catalyses 2 D-alanine + ATP = D-alanyl-D-alanine + ADP + phosphate + H(+). Its pathway is cell wall biogenesis; peptidoglycan biosynthesis. Functionally, cell wall formation. The sequence is that of D-alanine--D-alanine ligase from Bacteroides fragilis (strain YCH46).